Reading from the N-terminus, the 361-residue chain is Histidinol-phosphate aminotransferase (361 aa).

Position 218 is an N6-(pyridoxal phosphate)lysine (Lys218).

This sequence belongs to the class-II pyridoxal-phosphate-dependent aminotransferase family. Histidinol-phosphate aminotransferase subfamily. As to quaternary structure, homodimer. Pyridoxal 5'-phosphate serves as cofactor.

It catalyses the reaction L-histidinol phosphate + 2-oxoglutarate = 3-(imidazol-4-yl)-2-oxopropyl phosphate + L-glutamate. It participates in amino-acid biosynthesis; L-histidine biosynthesis; L-histidine from 5-phospho-alpha-D-ribose 1-diphosphate: step 7/9. This Dinoroseobacter shibae (strain DSM 16493 / NCIMB 14021 / DFL 12) protein is Histidinol-phosphate aminotransferase.